A 473-amino-acid chain; its full sequence is Heavy metal-associated isoprenylated plant protein 32 (473 aa).

Positions 9–72 constitute an HMA domain; the sequence is IQTCVLKVNI…KLAKSGKHAE (64 aa). Residues cysteine 20 and cysteine 23 each contribute to the a metal cation site. Disordered stretches follow at residues 96-139, 162-230, and 246-343; these read QIDH…KMGQ, KLPP…PNMT, and ANLA…QNMS. Positions 118-131 are enriched in gly residues; that stretch reads KNGGGGGGGGGGGN. Over residues 187–217 the composition is skewed to acidic residues; the sequence is PEDDDDDDFSDEFDDEFTDDDDDEFDDEFDD. Gly residues predominate over residues 253-339; that stretch reads AKNGGKGAPA…GFRPMGGGGP (87 aa). Cysteine 470 bears the Cysteine methyl ester mark. Residue cysteine 470 is the site of S-farnesyl cysteine attachment. A propeptide spans 471–473 (removed in mature form); that stretch reads DIM.

Belongs to the HIPP family.

In terms of biological role, heavy-metal-binding protein. The polypeptide is Heavy metal-associated isoprenylated plant protein 32 (Arabidopsis thaliana (Mouse-ear cress)).